The chain runs to 657 residues: MKVFSLILIAFVANAYCDEGASTEKEEKMGTIIGIDLGTTYSCVGVFKNGRVEIIANDQGNRITPSYVAFSGDQGERLIGDAAKNQLTINPENTIFDAKRLIGRFYNEKTVQQDIKHWPFKIVDKSNKPNVEVKVGSETKQFTPEEVSAMVLTKMKQIAESYLGHEVKNAVVTVPAYFNDAQKQATKDAGSIAGLNVVRIINEPTAAAIAYGLDKKDGERNILVFDLGGGTFDVSLLTIDSGVFEVLATNGDTHLGGEDFDQRVMEYFIKLYKKKSGKDLRKDNRAVQKLRREVEKAKRALSTQHQTKIEIESLFDGEDFSETLTRAKFEELNMDLFRATLKPVQKVLEDADMKKTDVHEIVLVGGSTRIPKVQQLIKDYFNGKEPSRGINPDEAVAYGAAVQAGVIGGVENTGDVVLLDVNPLTLGIETVGGVMTKLIGRNTVIPTKKSQVFSTAADSQSAVSIVIYEGERPMVMDNHKLGNFDVTGIPPAPRGVPQIEVTFEIDVNGILHVSAEDKGTGNKNKLTITNDHNRLSPEDIERMINDADKFAADDQAQKEKVESRNELEAYAYQMKTQIADKEKLGGKLTDEDKVSIESAVERAIEWLGSNQDASTEENKEQKKELESVVQPIVSKLYSAGGQGEQASEEPSEDHDEL.

The first 17 residues, 1–17, serve as a signal peptide directing secretion; that stretch reads MKVFSLILIAFVANAYC. Residues 38-41, lysine 99, 229-231, 295-302, and 366-369 each bind ATP; these read GTTY, GGT, EKAKRALS, and GSTR. The segment at 128–282 is nucleotide-binding (NBD); that stretch reads KPNVEVKVGS…KKKSGKDLRK (155 aa). The segment at 402–502 is substrate-binding (SBD); sequence VQAGVIGGVE…PRGVPQIEVT (101 aa). The disordered stretch occupies residues 607-657; that stretch reads LGSNQDASTEENKEQKKELESVVQPIVSKLYSAGGQGEQASEEPSEDHDEL. Residues 616–626 are compositionally biased toward basic and acidic residues; sequence EENKEQKKELE. The span at 646 to 657 shows a compositional bias: acidic residues; that stretch reads ASEEPSEDHDEL. Residues 654-657 carry the Prevents secretion from ER motif; it reads HDEL.

It belongs to the heat shock protein 70 family.

It is found in the endoplasmic reticulum lumen. The enzyme catalyses ATP + H2O = ADP + phosphate + H(+). With respect to regulation, the chaperone activity is regulated by ATP-induced allosteric coupling of the nucleotide-binding (NBD) and substrate-binding (SBD) domains. In the ADP-bound and nucleotide-free (apo) states, the two domains have little interaction. In contrast, in the ATP-bound state the two domains are tightly coupled, which results in drastically accelerated kinetics in both binding and release of polypeptide substrates. J domain-containing co-chaperones stimulate the ATPase activity and are required for efficient substrate recognition. Its function is as follows. Endoplasmic reticulum chaperone that plays a key role in protein folding and quality control in the endoplasmic reticulum lumen. Required for ER dynamics during the first embryonic cell divisions. Specifically, controls ER transition into sheet-like structures at the onset of mitosis, possibly by regulating homotypic membrane fusion. The protein is Endoplasmic reticulum chaperone BiP homolog (hsp-4) of Caenorhabditis elegans.